Here is a 109-residue protein sequence, read N- to C-terminus: Small ribosomal subunit protein uS17 (109 aa).

The protein belongs to the universal ribosomal protein uS17 family. In terms of assembly, part of the 30S ribosomal subunit.

In terms of biological role, one of the primary rRNA binding proteins, it binds specifically to the 5'-end of 16S ribosomal RNA. This Thermoplasma acidophilum (strain ATCC 25905 / DSM 1728 / JCM 9062 / NBRC 15155 / AMRC-C165) protein is Small ribosomal subunit protein uS17.